A 313-amino-acid chain; its full sequence is uncharacterized protein (313 aa).

A run of 6 helical transmembrane segments spans residues 16–36 (AGTWVMIGILGLTMVGFAFLA), 106–126 (FTILTGLFTIIIAAGIVANEF), 155–175 (FGLLLLLILFIGSTLLGLIFF), 208–228 (LSESVSALMVATMAFMLSAVF), 233–253 (LAVGFSIFLLVAGTTATAFIA), and 286–306 (FSLVMLAIYFIIFLLLAFGIF).

It is found in the cell membrane. This is an uncharacterized protein from Bacillus subtilis (strain 168).